The chain runs to 114 residues: Ribonuclease P protein component (114 aa).

It belongs to the RnpA family. As to quaternary structure, consists of a catalytic RNA component (M1 or rnpB) and a protein subunit.

It carries out the reaction Endonucleolytic cleavage of RNA, removing 5'-extranucleotides from tRNA precursor.. RNaseP catalyzes the removal of the 5'-leader sequence from pre-tRNA to produce the mature 5'-terminus. It can also cleave other RNA substrates such as 4.5S RNA. The protein component plays an auxiliary but essential role in vivo by binding to the 5'-leader sequence and broadening the substrate specificity of the ribozyme. This is Ribonuclease P protein component from Borrelia turicatae (strain 91E135).